The primary structure comprises 419 residues: Ribosome biogenesis protein WDR12 homolog (419 aa).

The interval V10–E91 is ubiquitin-like (UBL) domain. WD repeat units lie at residues L103 to I140, G142 to E184, G191 to S230, G249 to E287, S289 to V328, G334 to Y374, and G378 to M416.

Belongs to the WD repeat WDR12/YTM1 family.

It localises to the nucleus. Its subcellular location is the nucleolus. It is found in the nucleoplasm. Required for maturation of ribosomal RNAs and formation of the large ribosomal subunit. This chain is Ribosome biogenesis protein WDR12 homolog, found in Drosophila mojavensis (Fruit fly).